The primary structure comprises 161 residues: Putative sporulation sigma factor-processing peptidase (161 aa).

Asp38 is an active-site residue.

It belongs to the peptidase U4 family.

Functionally, probably activates the RNA polymerase sigma-35 factor at the stage II of sporulation. This is Putative sporulation sigma factor-processing peptidase from Bacillus thuringiensis subsp. kurstaki.